The chain runs to 356 residues: Tyrosine recombinase XerS (356 aa).

Positions 16-121 (IMPWYVLDYY…ALSSLYKYLT (106 aa)) constitute a Core-binding (CB) domain. Residues 169–354 (AFLDYVDKEY…VNDEQKNALD (186 aa)) form the Tyr recombinase domain. Residues Arg210, Lys234, His306, Arg309, and His332 contribute to the active site. The active-site O-(3'-phospho-DNA)-tyrosine intermediate is Tyr341.

This sequence belongs to the 'phage' integrase family. XerS subfamily.

Its subcellular location is the cytoplasm. FtsK is required for recombination. Its function is as follows. Site-specific tyrosine recombinase, which acts by catalyzing the cutting and rejoining of the recombining DNA molecules. Essential to convert dimers of the bacterial chromosome into monomers to permit their segregation at cell division. The polypeptide is Tyrosine recombinase XerS (Streptococcus equi subsp. zooepidemicus (strain H70)).